The following is a 145-amino-acid chain: D-aminoacyl-tRNA deacylase (145 aa).

A Gly-cisPro motif, important for rejection of L-amino acids motif is present at residues G137–P138.

The protein belongs to the DTD family. In terms of assembly, homodimer.

The protein resides in the cytoplasm. It carries out the reaction glycyl-tRNA(Ala) + H2O = tRNA(Ala) + glycine + H(+). The catalysed reaction is a D-aminoacyl-tRNA + H2O = a tRNA + a D-alpha-amino acid + H(+). Functionally, an aminoacyl-tRNA editing enzyme that deacylates mischarged D-aminoacyl-tRNAs. Also deacylates mischarged glycyl-tRNA(Ala), protecting cells against glycine mischarging by AlaRS. Acts via tRNA-based rather than protein-based catalysis; rejects L-amino acids rather than detecting D-amino acids in the active site. By recycling D-aminoacyl-tRNA to D-amino acids and free tRNA molecules, this enzyme counteracts the toxicity associated with the formation of D-aminoacyl-tRNA entities in vivo and helps enforce protein L-homochirality. The protein is D-aminoacyl-tRNA deacylase of Pseudoalteromonas translucida (strain TAC 125).